A 371-amino-acid polypeptide reads, in one-letter code: Anhydro-N-acetylmuramic acid kinase (371 aa).

G12–D20 provides a ligand contact to ATP.

This sequence belongs to the anhydro-N-acetylmuramic acid kinase family.

The catalysed reaction is 1,6-anhydro-N-acetyl-beta-muramate + ATP + H2O = N-acetyl-D-muramate 6-phosphate + ADP + H(+). It participates in amino-sugar metabolism; 1,6-anhydro-N-acetylmuramate degradation. It functions in the pathway cell wall biogenesis; peptidoglycan recycling. Functionally, catalyzes the specific phosphorylation of 1,6-anhydro-N-acetylmuramic acid (anhMurNAc) with the simultaneous cleavage of the 1,6-anhydro ring, generating MurNAc-6-P. Is required for the utilization of anhMurNAc either imported from the medium or derived from its own cell wall murein, and thus plays a role in cell wall recycling. The chain is Anhydro-N-acetylmuramic acid kinase from Brucella anthropi (strain ATCC 49188 / DSM 6882 / CCUG 24695 / JCM 21032 / LMG 3331 / NBRC 15819 / NCTC 12168 / Alc 37) (Ochrobactrum anthropi).